The following is a 270-amino-acid chain: 25S rRNA adenine-N(1) methyltransferase (270 aa).

The S-adenosyl-L-methionine site is built by G111 and D131.

It belongs to the BMT2 family.

It is found in the nucleus. Its subcellular location is the nucleolus. Its function is as follows. S-adenosyl-L-methionine-dependent methyltransferase that specifically methylates the N(1) position of an adenine present in helix 65 in 25S rRNA. The protein is 25S rRNA adenine-N(1) methyltransferase of Schizosaccharomyces pombe (strain 972 / ATCC 24843) (Fission yeast).